The chain runs to 806 residues: DNA topoisomerase 4 subunit A (806 aa).

Residues Leu33–Met499 form the Topo IIA-type catalytic domain. The active-site O-(5'-phospho-DNA)-tyrosine intermediate is the Tyr121.

Belongs to the type II topoisomerase GyrA/ParC subunit family. ParC type 2 subfamily. As to quaternary structure, heterotetramer composed of ParC and ParE.

It is found in the cell membrane. The protein resides in the cytoplasm. It carries out the reaction ATP-dependent breakage, passage and rejoining of double-stranded DNA.. Topoisomerase IV is essential for chromosome segregation. It relaxes supercoiled DNA. Performs the decatenation events required during the replication of a circular DNA molecule. The polypeptide is DNA topoisomerase 4 subunit A (Bacillus subtilis (strain 168)).